Here is a 414-residue protein sequence, read N- to C-terminus: Proton/glutamate-aspartate symporter (414 aa).

Over 1–3 the chain is Cytoplasmic; sequence MKK. Residues 4–24 traverse the membrane as a helical segment; sequence LIAFQILIALAVGAVIGHFFP. Over 25–42 the chain is Extracellular; it reads DFGMALRPVGDGFIRLIK. Residues 43–63 traverse the membrane as a helical segment; the sequence is MIVVPIVFSTIVIGAAGSGSM. At 64 to 73 the chain is on the cytoplasmic side; it reads KKMGSLGIKT. The chain crosses the membrane as a helical span at residues 74–94; it reads IIWFEVITTLVLGLGLLLANV. Over 95-144 the chain is Extracellular; that stretch reads LKPGVGLDLSHLAKKDIHELSGYTDKVVDFKQMILDIIPTNIIDVMARND. A helical transmembrane segment spans residues 145–165; sequence LLAVIFFAILFGVAAAGIGKA. Residues 166 to 182 lie on the Cytoplasmic side of the membrane; that stretch reads SEPVMKFFESTAQIMFK. The helical transmembrane segment at 183–203 threads the bilayer; sequence LTQIVMVTAPIGVLALMAASV. Residues 204–219 are Extracellular-facing; it reads GQYGIELLLPMFKLVG. The chain crosses the membrane as a helical span at residues 220-240; it reads TVFLGLFLILFVLFPLVGLIF. Position 241 (Q241) is a topological domain, cytoplasmic. A helical membrane pass occupies residues 242-262; it reads IKYFEVLKMIWDLFLIAFSTT. At 263-300 the chain is on the extracellular side; that stretch reads STETILPQLMDRMEKYGCPKRVVSFVVPSGLSLNCDGS. Residues 301 to 321 traverse the membrane as a helical segment; the sequence is SLYLSVSCIFLAQAFQVDMTL. Residues 322 to 324 are Cytoplasmic-facing; it reads SQQ. Helical transmembrane passes span 325 to 345 and 346 to 366; these read LLMMLVLVMTSKGIAAVPSGS and LVVLLATANAVGLPAEGVAII. Over 367-414 the chain is Cytoplasmic; sequence AGVDRVMDMARTGVNVPGHAIACIVVSKWEKAFRQKEWVSANSQTESI.

The protein belongs to the dicarboxylate/amino acid:cation symporter (DAACS) (TC 2.A.23) family.

The protein localises to the cell membrane. Its activity is regulated as follows. Glutamate uptake is inhibited by beta-hydroxyaspartate and cysteic acid. Functionally, catalyzes the proton-dependent, binding-protein-independent transport of glutamate and aspartate. In Bacillus subtilis (strain 168), this protein is Proton/glutamate-aspartate symporter.